Consider the following 161-residue polypeptide: Bifurcating [FeFe] hydrogenase gamma subunit (161 aa).

Cys-78, Cys-83, Cys-119, and Cys-123 together coordinate [2Fe-2S] cluster.

This sequence belongs to the complex I 24 kDa subunit family. Heterotrimer composed of HydA (alpha subunit), HydB (beta subunit) and HydC (gamma subunit). Near neutral and acidic pH conditions favor oligomerization of the heterotrimeric holoenzyme. [2Fe-2S] cluster serves as cofactor.

It localises to the cytoplasm. The enzyme catalyses 2 H2 + 2 oxidized [2Fe-2S]-[ferredoxin] + NAD(+) = 2 reduced [2Fe-2S]-[ferredoxin] + NADH + 3 H(+). Catalyzes the oxidation of the physiological electron carriers NADH and reduced ferredoxin, coupled to the production of H(2). Acts as a bifurcating [FeFe] hydrogenase, which uses the exergonic oxidation of reduced ferredoxin to drive the unfavorable oxidation of NADH to produce H(2). The gamma subunit might be the site where reduced ferredoxin is oxidized. The sequence is that of Bifurcating [FeFe] hydrogenase gamma subunit from Thermotoga maritima (strain ATCC 43589 / DSM 3109 / JCM 10099 / NBRC 100826 / MSB8).